The sequence spans 1135 residues: Vinculin (1135 aa).

Residues 2–835 are N-terminal globular head; sequence PVFHTRTIES…GAVAKVREAF (834 aa). At Tyr100 the chain carries Phosphotyrosine. Residues 168 to 208 form a talin-interaction region; the sequence is MTKMAKMIDERQQELTHQEHRVMLVNSMNTVKELLPVLISA. 3 consecutive repeat copies span residues 259–369, 370–479, and 480–589. A 3 X 112 AA tandem repeats region spans residues 259–589; that stretch reads ASKDTEAMKR…LKDLKARMQE (331 aa). A phosphotyrosine mark is found at Tyr537 and Tyr822. Positions 836 to 878 are linker (Pro-rich); it reads QPQEPDFPPPPPDLEHLHLTDELAPPKPPLPEGEVPPPRPPPP. Residues 837–888 form a disordered region; it reads PQEPDFPPPPPDLEHLHLTDELAPPKPPLPEGEVPPPRPPPPEEKDEEFPEQ. Pro residues predominate over residues 860 to 876; it reads PPKPPLPEGEVPPPRPP. Residues 879-1135 form a C-terminal tail region; sequence EEKDEEFPEQ…RWVRKTPWYQ (257 aa). 2 facilitates phospholipid membrane insertion regions span residues 1004–1047 and 1121–1135; these read RLVR…KRIR and AGFT…PWYQ. Residue Tyr1134 is modified to Phosphotyrosine; by SRC-type Tyr-kinases.

This sequence belongs to the vinculin/alpha-catenin family. In terms of assembly, exhibits self-association properties. Interacts with APBB1IP, NRAP and TLN1. Interacts with CTNNB1 and this interaction is necessary for its localization to the cell-cell junctions and for its function in regulating cell surface expression of E-cadherin. In terms of processing, phosphorylated; on serines, threonines and tyrosines. Phosphorylation on Tyr-1134 in activated platelets affects head-tail interactions and cell spreading but has no effect on actin binding nor on localization to focal adhesion plaques. Acetylated; mainly by myristic acid but also by a small amount of palmitic acid. Isoform Metavinculin is muscle-specific.

Its subcellular location is the cell membrane. The protein resides in the cell junction. It is found in the adherens junction. It localises to the focal adhesion. The protein localises to the cytoplasm. Its subcellular location is the cytoskeleton. The protein resides in the sarcolemma. It is found in the cell projection. It localises to the podosome. Functionally, actin filament (F-actin)-binding protein involved in cell-matrix adhesion and cell-cell adhesion. Regulates cell-surface E-cadherin expression and potentiates mechanosensing by the E-cadherin complex. May also play important roles in cell morphology and locomotion. The protein is Vinculin (VCL) of Gallus gallus (Chicken).